The following is a 480-amino-acid chain: Glycogen synthase 1 (480 aa).

An ADP-alpha-D-glucose-binding site is contributed by Lys-15.

The protein belongs to the glycosyltransferase 1 family. Bacterial/plant glycogen synthase subfamily.

It carries out the reaction [(1-&gt;4)-alpha-D-glucosyl](n) + ADP-alpha-D-glucose = [(1-&gt;4)-alpha-D-glucosyl](n+1) + ADP + H(+). It participates in glycan biosynthesis; glycogen biosynthesis. In terms of biological role, synthesizes alpha-1,4-glucan chains using ADP-glucose. In Rhizobium radiobacter (Agrobacterium tumefaciens), this protein is Glycogen synthase 1 (glgA1).